A 501-amino-acid chain; its full sequence is Lysine--tRNA ligase (501 aa).

Residues glutamate 402 and glutamate 409 each contribute to the Mg(2+) site.

Belongs to the class-II aminoacyl-tRNA synthetase family. In terms of assembly, homodimer. It depends on Mg(2+) as a cofactor.

It is found in the cytoplasm. The catalysed reaction is tRNA(Lys) + L-lysine + ATP = L-lysyl-tRNA(Lys) + AMP + diphosphate. The sequence is that of Lysine--tRNA ligase from Helicobacter pylori (strain G27).